A 227-amino-acid chain; its full sequence is Phosphoribosylformylglycinamidine synthase subunit PurQ (227 aa).

Residues 2–226 form the Glutamine amidotransferase type-1 domain; the sequence is KFAVIQFPGS…VKAWKEEQVN (225 aa). Cys86 acts as the Nucleophile in catalysis. Residues His195 and Glu197 contribute to the active site.

Part of the FGAM synthase complex composed of 1 PurL, 1 PurQ and 2 PurS subunits.

The protein localises to the cytoplasm. It carries out the reaction N(2)-formyl-N(1)-(5-phospho-beta-D-ribosyl)glycinamide + L-glutamine + ATP + H2O = 2-formamido-N(1)-(5-O-phospho-beta-D-ribosyl)acetamidine + L-glutamate + ADP + phosphate + H(+). It catalyses the reaction L-glutamine + H2O = L-glutamate + NH4(+). It functions in the pathway purine metabolism; IMP biosynthesis via de novo pathway; 5-amino-1-(5-phospho-D-ribosyl)imidazole from N(2)-formyl-N(1)-(5-phospho-D-ribosyl)glycinamide: step 1/2. Part of the phosphoribosylformylglycinamidine synthase complex involved in the purines biosynthetic pathway. Catalyzes the ATP-dependent conversion of formylglycinamide ribonucleotide (FGAR) and glutamine to yield formylglycinamidine ribonucleotide (FGAM) and glutamate. The FGAM synthase complex is composed of three subunits. PurQ produces an ammonia molecule by converting glutamine to glutamate. PurL transfers the ammonia molecule to FGAR to form FGAM in an ATP-dependent manner. PurS interacts with PurQ and PurL and is thought to assist in the transfer of the ammonia molecule from PurQ to PurL. This Listeria monocytogenes serotype 4a (strain HCC23) protein is Phosphoribosylformylglycinamidine synthase subunit PurQ.